We begin with the raw amino-acid sequence, 118 residues long: Large ribosomal subunit protein bL20 (118 aa).

Belongs to the bacterial ribosomal protein bL20 family.

In terms of biological role, binds directly to 23S ribosomal RNA and is necessary for the in vitro assembly process of the 50S ribosomal subunit. It is not involved in the protein synthesizing functions of that subunit. The sequence is that of Large ribosomal subunit protein bL20 (rplT) from Aquifex aeolicus (strain VF5).